The chain runs to 329 residues: Protein STRICTOSIDINE SYNTHASE-LIKE 11 (329 aa).

The N-terminal stretch at 1-23 (MMRSFVSLISLLLLLSFSSSVLS) is a signal peptide. 2 N-linked (GlcNAc...) asparagine glycosylation sites follow: Asn37 and Asn79.

It belongs to the strictosidine synthase family.

It localises to the vacuole. It carries out the reaction 3alpha(S)-strictosidine + H2O = secologanin + tryptamine. The protein operates within alkaloid biosynthesis; 3alpha(S)-strictosidine biosynthesis; 3alpha(S)-strictosidine from secologanin and tryptamine: step 1/1. Its function is as follows. Catalyzes the stereospecific condensation of tryptamine with secologanin to form strictosidine, the key intermediate of indole alkaloid biosynthesis. The protein is Protein STRICTOSIDINE SYNTHASE-LIKE 11 of Arabidopsis thaliana (Mouse-ear cress).